Consider the following 65-residue polypeptide: Large ribosomal subunit protein uL29 (65 aa).

This sequence belongs to the universal ribosomal protein uL29 family.

The polypeptide is Large ribosomal subunit protein uL29 (Acinetobacter baylyi (strain ATCC 33305 / BD413 / ADP1)).